The primary structure comprises 201 residues: Proteasome subunit beta 1 (201 aa).

Residue Met1 is a propeptide, removed in mature form; by autocatalysis. Thr2 acts as the Nucleophile in catalysis.

It belongs to the peptidase T1B family. In terms of assembly, the 20S proteasome core is composed of 14 alpha and 14 beta subunits that assemble into four stacked heptameric rings, resulting in a barrel-shaped structure. The two inner rings, each composed of seven catalytic beta subunits, are sandwiched by two outer rings, each composed of seven alpha subunits. The catalytic chamber with the active sites is on the inside of the barrel. Has a gated structure, the ends of the cylinder being occluded by the N-termini of the alpha-subunits. Is capped at one or both ends by the proteasome regulatory ATPase, PAN.

The protein resides in the cytoplasm. It catalyses the reaction Cleavage of peptide bonds with very broad specificity.. Its activity is regulated as follows. The formation of the proteasomal ATPase PAN-20S proteasome complex, via the docking of the C-termini of PAN into the intersubunit pockets in the alpha-rings, triggers opening of the gate for substrate entry. Interconversion between the open-gate and close-gate conformations leads to a dynamic regulation of the 20S proteasome proteolysis activity. Functionally, component of the proteasome core, a large protease complex with broad specificity involved in protein degradation. This Pyrobaculum calidifontis (strain DSM 21063 / JCM 11548 / VA1) protein is Proteasome subunit beta 1.